Consider the following 614-residue polypeptide: Spastin (614 aa).

Residues 1 to 45 form a disordered region; the sequence is MNSPGGRGKKKGSGGPSSPVPPRPPPPCQARSRPAPKPAPPPQSP. A required for nuclear localization region spans residues 1-50; sequence MNSPGGRGKKKGSGGPSSPVPPRPPPPCQARSRPAPKPAPPPQSPHKRNL. At 1–56 the chain is on the cytoplasmic side; that stretch reads MNSPGGRGKKKGSGGPSSPVPPRPPPPCQARSRPAPKPAPPPQSPHKRNLYYFSYP. A required for interaction with ATL1 region spans residues 1–80; it reads MNSPGGRGKK…LGLLFVWLCQ (80 aa). Residues 1 to 192 are required for midbody localization; that stretch reads MNSPGGRGKK…LVMAKDRLQL (192 aa). The segment at 1 to 298 is required for interaction with RTN1; it reads MNSPGGRGKK…STPKTNRTNK (298 aa). The Nuclear localization signal motif lies at 4–11; that stretch reads PGGRGKKK. Composition is skewed to pro residues over residues 18–28 and 35–44; these read SPVPPRPPPPC and APKPAPPPQS. Positions 50 to 87 are required for interaction with SSNA1 and microtubules; sequence LYYFSYPLFLGFALLRLVAFHLGLLFVWLCQRFSRALM. Residues 57 to 77 constitute an intramembrane region (helical); sequence LFLGFALLRLVAFHLGLLFVW. The Nuclear export signal motif lies at 59–67; sequence LGFALLRLV. Residues 78–614 are Cytoplasmic-facing; sequence LCQRFSRALM…WNKDFGDTTV (537 aa). The segment at 110–194 is sufficient for interaction with CHMP1B; sequence EAERVRAFHK…MAKDRLQLLE (85 aa). Residues 112–198 form a required for interaction with microtubules region; it reads ERVRAFHKQA…RLQLLEKLQP (87 aa). One can recognise an MIT domain in the interval 118-193; the sequence is HKQAFEYISV…VMAKDRLQLL (76 aa). Residues 220–310 form a disordered region; it reads NGHLQSESGA…TPTTAARKKK (91 aa). The sufficient for microtubule severing stretch occupies residues 226 to 614; the sequence is ESGAVPKRKD…WNKDFGDTTV (389 aa). A phosphoserine mark is found at Ser243 and Ser266. Positions 268-326 are required for interaction with microtubules and microtubule severing; that stretch reads SGLSMVSGVRQGPGSAAATHKSTPKTNRTNKPSTPTTAARKKKDLKNFRNVDSNLANLI. A compositionally biased stretch (polar residues) spans 287–304; that stretch reads HKSTPKTNRTNKPSTPTT. The residue at position 304 (Thr304) is a Phosphothreonine. The Nuclear localization signal motif lies at 307-310; it reads RKKK. Residue 380 to 387 participates in ATP binding; it reads GPPGNGKT. Ser595 is modified (phosphoserine).

Belongs to the AAA ATPase family. Spastin subfamily. Homohexamer. Mostly monomeric, but assembles into hexameric structure for short periods of time. Oligomerization seems to be a prerequisite for catalytic activity. Binding to ATP in a cleft between two adjacent subunits stabilizes the homohexameric form. Binds to microtubules at least in part via the alpha-tubulin and beta-tubulin tails. The hexamer adopts a ring conformation through which microtubules pass prior to being severed. Does not interact strongly with tubulin heterodimers. Interacts (via MIT domain) with CHMP1B; the interaction is direct. Interacts with SSNA1. Interacts with ATL1. Interacts with RTN1. Interacts with ZFYVE27. Interacts with REEP1. Interacts (via MIT domain) with IST1.

The protein resides in the membrane. It localises to the endoplasmic reticulum. Its subcellular location is the midbody. The protein localises to the cytoplasm. It is found in the cytoskeleton. The protein resides in the microtubule organizing center. It localises to the centrosome. Its subcellular location is the perinuclear region. The protein localises to the nucleus. It is found in the spindle. The protein resides in the cell projection. It localises to the axon. The enzyme catalyses n ATP + n H2O + a microtubule = n ADP + n phosphate + (n+1) alpha/beta tubulin heterodimers.. With respect to regulation, allosteric enzyme with a cooperative mechanism; at least two neighbor subunits influence each other strongly in spastin hexamers. Microtubule binding promotes cooperative interactions among spastin subunits. In terms of biological role, ATP-dependent microtubule severing protein that specifically recognizes and cuts microtubules that are polyglutamylated. Preferentially recognizes and acts on microtubules decorated with short polyglutamate tails: severing activity increases as the number of glutamates per tubulin rises from one to eight, but decreases beyond this glutamylation threshold. Severing activity is not dependent on tubulin acetylation or detyrosination. Microtubule severing promotes reorganization of cellular microtubule arrays and the release of microtubules from the centrosome following nucleation. It is critical for the biogenesis and maintenance of complex microtubule arrays in axons, spindles and cilia. SPAST is involved in abscission step of cytokinesis and nuclear envelope reassembly during anaphase in cooperation with the ESCRT-III complex. Recruited at the midbody, probably by IST1, and participates in membrane fission during abscission together with the ESCRT-III complex. Recruited to the nuclear membrane by IST1 and mediates microtubule severing, promoting nuclear envelope sealing and mitotic spindle disassembly during late anaphase. Required for membrane traffic from the endoplasmic reticulum (ER) to the Golgi and endosome recycling. Recruited by IST1 to endosomes and regulates early endosomal tubulation and recycling by mediating microtubule severing. Probably plays a role in axon growth and the formation of axonal branches. The sequence is that of Spastin from Bos taurus (Bovine).